Reading from the N-terminus, the 257-residue chain is MSSEIEADLSEKRLVREAGVAARVAQAIEGPLAGLGFRLVRVRMSNVNGCTVQIMAERPDGTFTIDDCEAVSRAISPILDVDDPVGGAYNLEVSSPGIDRPLVRVSDFARWAGYEAKVELSPPLDGRKRFRGILGAPDPTGTTVPIDLPDVKEGLPSRIDLPLKDLAEAHLVLTDELIRESLRRGGPPAADEADEAEEAEDEEVAAESASSPARAPFQPKGPRKASPAAKPQKQARTGPKKPVVTKASRLKDRDSLH.

The interval 182-257 (LRRGGPPAAD…SRLKDRDSLH (76 aa)) is disordered. A compositionally biased stretch (acidic residues) spans 191–205 (DEADEAEEAEDEEVA). Over residues 224 to 236 (KASPAAKPQKQAR) the composition is skewed to low complexity.

Belongs to the RimP family.

It localises to the cytoplasm. Its function is as follows. Required for maturation of 30S ribosomal subunits. The chain is Ribosome maturation factor RimP from Methylobacterium radiotolerans (strain ATCC 27329 / DSM 1819 / JCM 2831 / NBRC 15690 / NCIMB 10815 / 0-1).